The following is a 221-amino-acid chain: uncharacterized protein (221 aa).

4 consecutive transmembrane segments (helical) span residues 30–50, 62–82, 144–164, and 179–199; these read FGIF…LPLA, AGVV…LYWI, VWVF…VYVY, and ILDQ…LLYL.

Belongs to the DedA family.

Its subcellular location is the cell membrane. This is an uncharacterized protein from Bacillus subtilis (strain 168).